The chain runs to 362 residues: Patr class I histocompatibility antigen, A-5 alpha chain (362 aa).

The signal sequence occupies residues 1–24; the sequence is MQVTAPRTVLLLLSAALALTETWA. Residues 25–114 form an alpha-1 region; that stretch reads GSHSMKYFYT…LRGYYNQSEA (90 aa). Residues 25–308 lie on the Extracellular side of the membrane; that stretch reads GSHSMKYFYT…EPSSQSTIPI (284 aa). N110 carries N-linked (GlcNAc...) asparagine glycosylation. An alpha-2 region spans residues 115–206; it reads GSHIIQRMYG…ENGKETLQRA (92 aa). Disulfide bonds link C125–C188 and C227–C283. An alpha-3 region spans residues 207–298; the sequence is DPPKTHVTHH…GLPKPLTLRW (92 aa). The Ig-like C1-type domain maps to 209 to 295; that stretch reads PKTHVTHHPI…QHEGLPKPLT (87 aa). Residues 299 to 308 are connecting peptide; it reads EPSSQSTIPI. Residues 309–332 traverse the membrane as a helical segment; that stretch reads VGIVAGLAVLAVVVIGAVVAAVMC. Over 333-362 the chain is Cytoplasmic; that stretch reads RRKSSGGKGGSYSQAASSDSAQGSDVSLTA. The interval 336-362 is disordered; that stretch reads SSGGKGGSYSQAASSDSAQGSDVSLTA. At S343 the chain carries Phosphoserine. Residues 343–362 are compositionally biased toward low complexity; the sequence is SYSQAASSDSAQGSDVSLTA. The residue at position 344 (Y344) is a Phosphotyrosine. Phosphoserine occurs at positions 345, 349, 350, 352, 356, and 359.

It belongs to the MHC class I family. As to quaternary structure, heterodimer of an alpha chain and a beta chain (beta-2-microglobulin).

Its subcellular location is the membrane. Functionally, involved in the presentation of foreign antigens to the immune system. This is Patr class I histocompatibility antigen, A-5 alpha chain from Pan troglodytes (Chimpanzee).